Here is a 389-residue protein sequence, read N- to C-terminus: Trans-2-enoyl-CoA reductase [NADH] (389 aa).

Residues 47–52 (GASTGY), 73–74 (FE), 110–111 (DA), and 138–139 (LA) each bind NAD(+). Tyrosine 224 lines the substrate pocket. Tyrosine 234 serves as the catalytic Proton donor. NAD(+) is bound by residues lysine 243 and 272 to 274 (LVT).

The protein belongs to the TER reductase family. In terms of assembly, monomer.

It carries out the reaction a 2,3-saturated acyl-CoA + NAD(+) = a (2E)-enoyl-CoA + NADH + H(+). It functions in the pathway lipid metabolism; fatty acid biosynthesis. Functionally, involved in the fatty acid synthesis (FAS II). Catalyzes the reduction of a carbon-carbon double bond in an enoyl moiety that is covalently linked to a coenzyme A (CoA). This Clostridium perfringens (strain ATCC 13124 / DSM 756 / JCM 1290 / NCIMB 6125 / NCTC 8237 / Type A) protein is Trans-2-enoyl-CoA reductase [NADH].